The chain runs to 163 residues: Nucleotide-binding protein HAPS_2236 (163 aa).

Belongs to the YajQ family.

Its function is as follows. Nucleotide-binding protein. The protein is Nucleotide-binding protein HAPS_2236 of Glaesserella parasuis serovar 5 (strain SH0165) (Haemophilus parasuis).